Consider the following 300-residue polypeptide: tRNA uridine(34) hydroxylase (300 aa).

The region spanning 128–222 (ADPEVIVVDT…YLEDVPQAQS (95 aa)) is the Rhodanese domain. Cysteine 182 serves as the catalytic Cysteine persulfide intermediate.

The protein belongs to the TrhO family.

It catalyses the reaction uridine(34) in tRNA + AH2 + O2 = 5-hydroxyuridine(34) in tRNA + A + H2O. Its function is as follows. Catalyzes oxygen-dependent 5-hydroxyuridine (ho5U) modification at position 34 in tRNAs. This chain is tRNA uridine(34) hydroxylase, found in Deinococcus radiodurans (strain ATCC 13939 / DSM 20539 / JCM 16871 / CCUG 27074 / LMG 4051 / NBRC 15346 / NCIMB 9279 / VKM B-1422 / R1).